The following is a 195-amino-acid chain: Recombination protein RecR (195 aa).

The segment at 56 to 71 (CRQCHSFSDDDICPIC) adopts a C4-type zinc-finger fold. In terms of domain architecture, Toprim spans 79-174 (SVLCVVETAA…KVTRIAQGIP (96 aa)).

It belongs to the RecR family.

May play a role in DNA repair. It seems to be involved in an RecBC-independent recombinational process of DNA repair. It may act with RecF and RecO. The sequence is that of Recombination protein RecR from Psychrobacter sp. (strain PRwf-1).